Consider the following 95-residue polypeptide: Aspartyl/glutamyl-tRNA(Asn/Gln) amidotransferase subunit C (95 aa).

Belongs to the GatC family. In terms of assembly, heterotrimer of A, B and C subunits.

The catalysed reaction is L-glutamyl-tRNA(Gln) + L-glutamine + ATP + H2O = L-glutaminyl-tRNA(Gln) + L-glutamate + ADP + phosphate + H(+). The enzyme catalyses L-aspartyl-tRNA(Asn) + L-glutamine + ATP + H2O = L-asparaginyl-tRNA(Asn) + L-glutamate + ADP + phosphate + 2 H(+). Functionally, allows the formation of correctly charged Asn-tRNA(Asn) or Gln-tRNA(Gln) through the transamidation of misacylated Asp-tRNA(Asn) or Glu-tRNA(Gln) in organisms which lack either or both of asparaginyl-tRNA or glutaminyl-tRNA synthetases. The reaction takes place in the presence of glutamine and ATP through an activated phospho-Asp-tRNA(Asn) or phospho-Glu-tRNA(Gln). The sequence is that of Aspartyl/glutamyl-tRNA(Asn/Gln) amidotransferase subunit C from Alcanivorax borkumensis (strain ATCC 700651 / DSM 11573 / NCIMB 13689 / SK2).